A 361-amino-acid polypeptide reads, in one-letter code: Phosphoserine aminotransferase (361 aa).

L-glutamate is bound by residues Ser9 and Arg42. Residues 76 to 77 (GR), Trp102, Thr153, Asp173, and Gln196 each bind pyridoxal 5'-phosphate. Lys197 is modified (N6-(pyridoxal phosphate)lysine). A pyridoxal 5'-phosphate-binding site is contributed by 238–239 (NT).

This sequence belongs to the class-V pyridoxal-phosphate-dependent aminotransferase family. SerC subfamily. In terms of assembly, homodimer. Pyridoxal 5'-phosphate serves as cofactor.

Its subcellular location is the cytoplasm. It catalyses the reaction O-phospho-L-serine + 2-oxoglutarate = 3-phosphooxypyruvate + L-glutamate. The enzyme catalyses 4-(phosphooxy)-L-threonine + 2-oxoglutarate = (R)-3-hydroxy-2-oxo-4-phosphooxybutanoate + L-glutamate. It functions in the pathway amino-acid biosynthesis; L-serine biosynthesis; L-serine from 3-phospho-D-glycerate: step 2/3. The protein operates within cofactor biosynthesis; pyridoxine 5'-phosphate biosynthesis; pyridoxine 5'-phosphate from D-erythrose 4-phosphate: step 3/5. Its function is as follows. Catalyzes the reversible conversion of 3-phosphohydroxypyruvate to phosphoserine and of 3-hydroxy-2-oxo-4-phosphonooxybutanoate to phosphohydroxythreonine. The chain is Phosphoserine aminotransferase from Cronobacter sakazakii (strain ATCC BAA-894) (Enterobacter sakazakii).